The primary structure comprises 247 residues: Adenylate kinase (247 aa).

42-47 (GAGKGT) lines the ATP pocket. The segment at 62 to 91 (ATGDMLRAQVTAKTELGVQAKKIMDQGGLV) is NMP. AMP-binding positions include Thr-63, Arg-68, 89-91 (GLV), 118-121 (GFPR), and Gln-125. The LID stretch occupies residues 159–196 (GRLVHPASGRSYHKLFNPPKKEMTDDQTGEPLVQRSDD). ATP is bound by residues Arg-160 and 169–170 (SY). Residues 169 to 191 (SYHKLFNPPKKEMTDDQTGEPLV) form a disordered region. AMP is bound by residues Arg-193 and Arg-204. Gln-232 contacts ATP.

Belongs to the adenylate kinase family. AK2 subfamily. In terms of assembly, monomer.

The protein resides in the cytoplasm. It is found in the cytosol. It localises to the mitochondrion intermembrane space. It carries out the reaction AMP + ATP = 2 ADP. In terms of biological role, catalyzes the reversible transfer of the terminal phosphate group between ATP and AMP. Plays an important role in cellular energy homeostasis and in adenine nucleotide metabolism. Adenylate kinase activity is critical for regulation of the phosphate utilization and the AMP de novo biosynthesis pathways. The sequence is that of Adenylate kinase from Meyerozyma guilliermondii (strain ATCC 6260 / CBS 566 / DSM 6381 / JCM 1539 / NBRC 10279 / NRRL Y-324) (Yeast).